The following is a 157-amino-acid chain: Rieske domain-containing protein (157 aa).

Position 1 is an N-acetylmethionine (Met-1). The residue at position 6 (Ser-6) is a Phosphoserine. Rieske domains follow at residues 16–127 (TSVC…VDNG) and 17–131 (SVCV…NIYV). 4 residues coordinate [2Fe-2S] cluster: Cys-57, His-59, Cys-80, and His-83.

Requires [2Fe-2S] cluster as cofactor.

The protein is Rieske domain-containing protein (Rfesd) of Mus musculus (Mouse).